A 379-amino-acid polypeptide reads, in one-letter code: Homoserine O-succinyltransferase (379 aa).

In terms of domain architecture, AB hydrolase-1 spans N51–L360. The active-site Nucleophile is the S157. R227 lines the substrate pocket. Active-site residues include D323 and H356. D357 lines the substrate pocket.

This sequence belongs to the AB hydrolase superfamily. MetX family. Homodimer.

The protein resides in the cytoplasm. The enzyme catalyses L-homoserine + succinyl-CoA = O-succinyl-L-homoserine + CoA. The protein operates within amino-acid biosynthesis; L-methionine biosynthesis via de novo pathway; O-succinyl-L-homoserine from L-homoserine: step 1/1. Requires MetW for activity. In terms of biological role, transfers a succinyl group from succinyl-CoA to L-homoserine, forming succinyl-L-homoserine. The chain is Homoserine O-succinyltransferase from Pseudomonas putida (strain ATCC 47054 / DSM 6125 / CFBP 8728 / NCIMB 11950 / KT2440).